A 292-amino-acid chain; its full sequence is Ventral anterior homeobox 2 (292 aa).

Residues 1–36 (MGDGGAERDRGPKRREEPGGRSGRHGEHRGAEDLRA) show a composition bias toward basic and acidic residues. The segment at 1–74 (MGDGGAERDR…DGQQALGETD (74 aa)) is disordered. Residues 102 to 161 (PKRTRTSFTAEQLYRLEMEFQRCQYVVGRERTELARQLNLSETQVKVWFQNRRTKQKKDQ) constitute a DNA-binding region (homeobox). Residues 207 to 242 (LPGLPASHRGTSLVDPRNSSPRLNPMPSASASSPLP) are disordered.

The protein belongs to the EMX homeobox family. As to expression, expressed in the developing and mature retina.

It is found in the nucleus. Functionally, transcription factor that may function in dorsoventral specification of the forebrain. Regulates the expression of Wnt signaling antagonists including the expression of a truncated TCF7L2 isoform that cannot bind CTNNB1 and acts therefore as a potent dominant-negative Wnt antagonist. Plays a crucial role in eye development and, in particular, in the specification of the ventral optic vesicle. May be a regulator of axial polarization in the retina. This Mus musculus (Mouse) protein is Ventral anterior homeobox 2 (Vax2).